Here is an 801-residue protein sequence, read N- to C-terminus: Disks large homolog 4 (801 aa).

The region spanning 4–60 (KREDTERALQAMEACQSAGDEGFRTRAERLLTIFQSDLFQALLDIQEFYELTVFENQ) is the L27 domain. PDZ domains are found at residues 153–240 (EITL…LRHK) and 248–335 (ELKL…AKTL). The segment at 339 to 373 (HHQDAYNPPDITSSYSPHMDMSDYPQALSPSSPRR) is disordered. One can recognise a PDZ 3 domain in the interval 393–474 (RVVIHRGSTG…TVTIITQYRP (82 aa)). The SH3 domain maps to 507-577 (KRSFFIRALF…PSKRRVERKE (71 aa)). One can recognise a Guanylate kinase-like domain in the interval 610–786 (ARPVIILGPS…IYHHVKSVIE (177 aa)).

Belongs to the MAGUK family. In terms of processing, ubiquitinated by MDM2 in response to NMDA receptor activation, leading to proteasome-mediated degradation of DLG4 which is required for AMPA receptor endocytosis. Palmitoylated. Palmitoylation is required for targeting to postsynaptic density, plasma membrane and synapses.

The protein localises to the cell membrane. The protein resides in the postsynaptic density. It localises to the synapse. Its function is as follows. Postsynaptic scaffolding protein that plays a critical role in synaptogenesis and synaptic plasticity by providing a platform for the postsynaptic clustering of crucial synaptic proteins. This is Disks large homolog 4 (dlg4) from Danio rerio (Zebrafish).